Reading from the N-terminus, the 87-residue chain is Omega-lycotoxin-Am1b (87 aa).

A signal peptide spans 1 to 17; sequence MKLSIFFVLFFIAIAYC. A propeptide spanning residues 18–40 is cleaved from the precursor; it reads QPEFLDDEEDEVEETLPVAEEGR. Cystine bridges form between C44-C59, C51-C64, C58-C84, and C66-C82.

This sequence belongs to the neurotoxin omega-lctx family. Expressed by the venom gland.

The protein localises to the secreted. Functionally, modulates Cav2.1/CACNA1A voltage-gated calcium channels (P/Q-type currents) in rat cerebellar Purkinje cells and hippocampal CA1-CA3 neurons. At saturating concentrations (&gt;10 nM) decelerates activation kinetics and slightly increases peak amplitude without affecting deactivation kinetics. In vivo, does not cause death when intravenously injected into mice. In rat models, through its activity on Cav2.1/CACNA1A, has an ameliorative effect on memory defects provoked by hyperstimulation of N-methyl-D-aspartate receptors (NMDARs) in the hippocampus. This is Omega-lycotoxin-Am1b from Alopecosa marikovskyi (Wolf spider).